Consider the following 259-residue polypeptide: Methanethiol S-methyltransferase 2 (259 aa).

A run of 5 helical transmembrane segments spans residues 5–25 (LAIL…FLYA), 46–66 (LGEA…QHSV), 88–108 (TYVL…RPIP), 115–135 (SGIA…IAFA), and 182–202 (FLLA…FALA).

This sequence belongs to the nurim family.

The protein resides in the membrane. The catalysed reaction is methanethiol + S-adenosyl-L-methionine = dimethyl sulfide + S-adenosyl-L-homocysteine + H(+). Catalyzes the methylation of methanethiol (MeSH) to yield dimethylsulphide (DMS). This Bradyrhizobium diazoefficiens (strain JCM 10833 / BCRC 13528 / IAM 13628 / NBRC 14792 / USDA 110) protein is Methanethiol S-methyltransferase 2.